We begin with the raw amino-acid sequence, 346 residues long: Guanine nucleotide-binding protein subunit beta-2 (346 aa).

WD repeat units follow at residues 57-96 (GHINKVNSVHFAGDSRHCVTGSLDGKLIIWDTWTANKVQI), 99-138 (LRSAWVMTVAFSPSGNFVACGGMDNQCTVYDVNNRDASGV), 147-185 (GYEGFLSSCRFLDDGHLITGSGDMKICHWDLEKGVKTMD), 188-227 (GHAGDIAGLSLSPDMKTYITGSVDKTAKLWDVREEGHKQM), 230-269 (GHDMDVSSVCYHPSGFGFASCSEDQTARMYDLRADQQIAQ), 274-313 (QKNTGFTSCALSTSGRYLMCGGIEGNVHSWDTMKQRHTGT), and 316-346 (GHENRITCISLCPNGMCLASTSWDQQVRLWL).

The protein belongs to the WD repeat G protein beta family. In terms of assembly, g proteins are composed of 3 units, alpha, beta and gamma. Interacts with Ggamma30A/Guanine nucleotide-binding protein subunit gamma-e. Expressed exclusively in photoreceptor cells in the compound eye (at protein level).

Its subcellular location is the cytoplasm. It localises to the cell projection. It is found in the axon. The protein resides in the rhabdomere. Guanine nucleotide-binding proteins (G proteins) are involved as a modulator or transducer in various transmembrane signaling systems. The beta and gamma chains are required for the GTPase activity, for replacement of GDP by GTP, and for G protein-effector interaction. This Drosophila melanogaster (Fruit fly) protein is Guanine nucleotide-binding protein subunit beta-2 (Gbeta76C).